Reading from the N-terminus, the 335-residue chain is Lipoyl synthase (335 aa).

Over residues 1 to 13 (MTIDTNPESSTPS) the composition is skewed to polar residues. A disordered region spans residues 1 to 29 (MTIDTNPESSTPSAPAYNPSEKQKGSAKT). [4Fe-4S] cluster contacts are provided by cysteine 75, cysteine 80, cysteine 86, cysteine 101, cysteine 105, cysteine 108, and serine 315. Residues 86-304 (CFGKGTATFM…EEEAYKMGFA (219 aa)) enclose the Radical SAM core domain.

Belongs to the radical SAM superfamily. Lipoyl synthase family. It depends on [4Fe-4S] cluster as a cofactor.

The protein localises to the cytoplasm. It carries out the reaction [[Fe-S] cluster scaffold protein carrying a second [4Fe-4S](2+) cluster] + N(6)-octanoyl-L-lysyl-[protein] + 2 oxidized [2Fe-2S]-[ferredoxin] + 2 S-adenosyl-L-methionine + 4 H(+) = [[Fe-S] cluster scaffold protein] + N(6)-[(R)-dihydrolipoyl]-L-lysyl-[protein] + 4 Fe(3+) + 2 hydrogen sulfide + 2 5'-deoxyadenosine + 2 L-methionine + 2 reduced [2Fe-2S]-[ferredoxin]. It functions in the pathway protein modification; protein lipoylation via endogenous pathway; protein N(6)-(lipoyl)lysine from octanoyl-[acyl-carrier-protein]: step 2/2. Functionally, catalyzes the radical-mediated insertion of two sulfur atoms into the C-6 and C-8 positions of the octanoyl moiety bound to the lipoyl domains of lipoate-dependent enzymes, thereby converting the octanoylated domains into lipoylated derivatives. This chain is Lipoyl synthase, found in Herminiimonas arsenicoxydans.